The following is a 101-amino-acid chain: Phosphoribosyl-ATP pyrophosphatase (101 aa).

Belongs to the PRA-PH family.

The protein localises to the cytoplasm. The catalysed reaction is 1-(5-phospho-beta-D-ribosyl)-ATP + H2O = 1-(5-phospho-beta-D-ribosyl)-5'-AMP + diphosphate + H(+). Its pathway is amino-acid biosynthesis; L-histidine biosynthesis; L-histidine from 5-phospho-alpha-D-ribose 1-diphosphate: step 2/9. The polypeptide is Phosphoribosyl-ATP pyrophosphatase (Natronomonas pharaonis (strain ATCC 35678 / DSM 2160 / CIP 103997 / JCM 8858 / NBRC 14720 / NCIMB 2260 / Gabara) (Halobacterium pharaonis)).